A 1169-amino-acid chain; its full sequence is ATP-dependent helicase/deoxyribonuclease subunit B (1169 aa).

Positions 1-285 (MEIQFLAGRS…TIFERNHRHL (285 aa)) constitute a UvrD-like helicase ATP-binding domain. 8–15 (GRSGSGKT) contributes to the ATP binding site. The 307-residue stretch at 280 to 586 (RNHRHLYTPD…KFALIPPSLD (307 aa)) folds into the UvrD-like helicase C-terminal domain. Residues cysteine 801, cysteine 1121, cysteine 1124, and cysteine 1130 each contribute to the [4Fe-4S] cluster site.

It belongs to the helicase family. AddB/RexB type 1 subfamily. In terms of assembly, heterodimer of AddA and AddB. Mg(2+) serves as cofactor. [4Fe-4S] cluster is required as a cofactor.

The heterodimer acts as both an ATP-dependent DNA helicase and an ATP-dependent, dual-direction single-stranded exonuclease. Recognizes the chi site generating a DNA molecule suitable for the initiation of homologous recombination. The AddB subunit has 5' -&gt; 3' nuclease activity but not helicase activity. The chain is ATP-dependent helicase/deoxyribonuclease subunit B from Bacillus pumilus (strain SAFR-032).